The primary structure comprises 794 residues: Protein transport protein SEC23 G (794 aa).

Zn(2+) is bound by residues C56, C59, C78, and C81. The tract at residues 56–81 is zinc finger-like; that stretch reads CSRCGAVLNPYARVDYQSRIWSCPFC.

This sequence belongs to the SEC23/SEC24 family. SEC23 subfamily. Component of the coat protein complex II (COPII), composed of at least five proteins: the Sec23/24 complex, the Sec13/31 complex and Sar1. Interacts with SEC24A.

Its subcellular location is the cytoplasmic vesicle. The protein localises to the COPII-coated vesicle membrane. The protein resides in the endoplasmic reticulum membrane. It localises to the membrane. Its function is as follows. Component of the coat protein complex II (COPII) which promotes the formation of transport vesicles from the endoplasmic reticulum (ER). The coat has two main functions, the physical deformation of the endoplasmic reticulum membrane into vesicles and the selection of cargo molecules. In Arabidopsis thaliana (Mouse-ear cress), this protein is Protein transport protein SEC23 G.